We begin with the raw amino-acid sequence, 259 residues long: Type III pantothenate kinase (259 aa).

Position 6–13 (6–13 (DIGNTNVV)) interacts with ATP. 107-110 (GADR) lines the substrate pocket. The Proton acceptor role is filled by aspartate 109. Residue aspartate 129 participates in K(+) binding. Residue threonine 132 coordinates ATP. Threonine 184 lines the substrate pocket.

It belongs to the type III pantothenate kinase family. In terms of assembly, homodimer. NH4(+) is required as a cofactor. Requires K(+) as cofactor.

It localises to the cytoplasm. The enzyme catalyses (R)-pantothenate + ATP = (R)-4'-phosphopantothenate + ADP + H(+). It participates in cofactor biosynthesis; coenzyme A biosynthesis; CoA from (R)-pantothenate: step 1/5. Functionally, catalyzes the phosphorylation of pantothenate (Pan), the first step in CoA biosynthesis. This is Type III pantothenate kinase from Thermomicrobium roseum (strain ATCC 27502 / DSM 5159 / P-2).